The primary structure comprises 156 residues: Small ribosomal subunit protein uS7 (156 aa).

The protein belongs to the universal ribosomal protein uS7 family. In terms of assembly, part of the 30S ribosomal subunit. Contacts proteins S9 and S11.

One of the primary rRNA binding proteins, it binds directly to 16S rRNA where it nucleates assembly of the head domain of the 30S subunit. Is located at the subunit interface close to the decoding center, probably blocks exit of the E-site tRNA. This Prochlorococcus marinus (strain SARG / CCMP1375 / SS120) protein is Small ribosomal subunit protein uS7.